Here is a 552-residue protein sequence, read N- to C-terminus: Dihydroxy-acid dehydratase (552 aa).

D78 lines the Mg(2+) pocket. C119 contributes to the [2Fe-2S] cluster binding site. Residues D120 and K121 each coordinate Mg(2+). K121 is subject to N6-carboxylysine. C191 provides a ligand contact to [2Fe-2S] cluster. E442 provides a ligand contact to Mg(2+). S468 acts as the Proton acceptor in catalysis.

This sequence belongs to the IlvD/Edd family. In terms of assembly, homodimer. It depends on [2Fe-2S] cluster as a cofactor. Mg(2+) is required as a cofactor.

The catalysed reaction is (2R)-2,3-dihydroxy-3-methylbutanoate = 3-methyl-2-oxobutanoate + H2O. It catalyses the reaction (2R,3R)-2,3-dihydroxy-3-methylpentanoate = (S)-3-methyl-2-oxopentanoate + H2O. It functions in the pathway amino-acid biosynthesis; L-isoleucine biosynthesis; L-isoleucine from 2-oxobutanoate: step 3/4. The protein operates within amino-acid biosynthesis; L-valine biosynthesis; L-valine from pyruvate: step 3/4. In terms of biological role, functions in the biosynthesis of branched-chain amino acids. Catalyzes the dehydration of (2R,3R)-2,3-dihydroxy-3-methylpentanoate (2,3-dihydroxy-3-methylvalerate) into 2-oxo-3-methylpentanoate (2-oxo-3-methylvalerate) and of (2R)-2,3-dihydroxy-3-methylbutanoate (2,3-dihydroxyisovalerate) into 2-oxo-3-methylbutanoate (2-oxoisovalerate), the penultimate precursor to L-isoleucine and L-valine, respectively. This Clostridium botulinum (strain Eklund 17B / Type B) protein is Dihydroxy-acid dehydratase.